Reading from the N-terminus, the 197-residue chain is Ribonuclease HII (197 aa).

The RNase H type-2 domain occupies 11-197 (GRIAGVDEVG…FGPVKRVLGL (187 aa)). Aspartate 17, glutamate 18, and aspartate 109 together coordinate a divalent metal cation.

This sequence belongs to the RNase HII family. Mn(2+) serves as cofactor. Mg(2+) is required as a cofactor.

It localises to the cytoplasm. It catalyses the reaction Endonucleolytic cleavage to 5'-phosphomonoester.. Its function is as follows. Endonuclease that specifically degrades the RNA of RNA-DNA hybrids. This is Ribonuclease HII from Edwardsiella ictaluri (strain 93-146).